Consider the following 155-residue polypeptide: Ribonuclease H (155 aa).

Residues 9–150 (DGQQVEMWTD…ADALANQGVE (142 aa)) enclose the RNase H type-1 domain. Mg(2+) contacts are provided by aspartate 18, glutamate 56, aspartate 78, and aspartate 142.

Belongs to the RNase H family. Monomer. Requires Mg(2+) as cofactor.

The protein resides in the cytoplasm. It carries out the reaction Endonucleolytic cleavage to 5'-phosphomonoester.. Endonuclease that specifically degrades the RNA of RNA-DNA hybrids. This Bordetella bronchiseptica (strain ATCC BAA-588 / NCTC 13252 / RB50) (Alcaligenes bronchisepticus) protein is Ribonuclease H.